The chain runs to 737 residues: Ribosome-releasing factor 2, mitochondrial (737 aa).

The transit peptide at 1–29 (MLKYALHSGGMPRNRLLRQLSAYIFRRSY) directs the protein to the mitochondrion. A tr-type G domain is found at 31-310 (SNIRNIGILA…AVNTYLPAPE (280 aa)). GTP-binding positions include 40–47 (AHIDAGKT), 104–108 (DTPGH), and 158–161 (NKMD).

This sequence belongs to the TRAFAC class translation factor GTPase superfamily. Classic translation factor GTPase family. EF-G/EF-2 subfamily.

It is found in the mitochondrion. Its function is as follows. Mitochondrial GTPase that mediates the disassembly of ribosomes from messenger RNA at the termination of mitochondrial protein biosynthesis. Not involved in the GTP-dependent ribosomal translocation step during translation elongation. The sequence is that of Ribosome-releasing factor 2, mitochondrial from Drosophila persimilis (Fruit fly).